The sequence spans 240 residues: Cysteine-rich venom protein catrin (240 aa).

Positions Met-1 to Gly-19 are cleaved as a signal peptide. The SCP domain occupies Val-38–Tyr-166. 8 disulfide bridges follow: Cys-75–Cys-153, Cys-92–Cys-167, Cys-148–Cys-164, Cys-186–Cys-193, Cys-189–Cys-198, Cys-202–Cys-235, Cys-211–Cys-229, and Cys-220–Cys-233. The ShKT domain maps to Cys-202–Cys-235.

It belongs to the CRISP family. Expressed by the venom gland.

It is found in the secreted. In terms of biological role, catrin-2 weakly blocks contraction of smooth muscle elicited by high potassium-induced depolarization, but does not block caffeine-stimulated contraction. Catrin-1 has no significant effect. May target voltage-gated calcium channels on smooth muscle. In Crotalus atrox (Western diamondback rattlesnake), this protein is Cysteine-rich venom protein catrin.